A 110-amino-acid chain; its full sequence is Large ribosomal subunit protein uL22 (110 aa).

Belongs to the universal ribosomal protein uL22 family. Part of the 50S ribosomal subunit.

In terms of biological role, this protein binds specifically to 23S rRNA; its binding is stimulated by other ribosomal proteins, e.g. L4, L17, and L20. It is important during the early stages of 50S assembly. It makes multiple contacts with different domains of the 23S rRNA in the assembled 50S subunit and ribosome. Functionally, the globular domain of the protein is located near the polypeptide exit tunnel on the outside of the subunit, while an extended beta-hairpin is found that lines the wall of the exit tunnel in the center of the 70S ribosome. The sequence is that of Large ribosomal subunit protein uL22 from Ruthia magnifica subsp. Calyptogena magnifica.